We begin with the raw amino-acid sequence, 247 residues long: Serine protease 1 (247 aa).

An N-terminal signal peptide occupies residues methionine 1–alanine 15. Residues alanine 16–lysine 23 constitute a propeptide, activation peptide. One can recognise a Peptidase S1 domain in the interval isoleucine 24–alanine 244. 5 cysteine pairs are disulfide-bonded: cysteine 30–cysteine 160, cysteine 48–cysteine 64, cysteine 139–cysteine 206, cysteine 171–cysteine 185, and cysteine 196–cysteine 220. The active-site Charge relay system is histidine 63. Positions 75, 77, 80, and 85 each coordinate Ca(2+). Aspartate 107 (charge relay system) is an active-site residue. Position 154 is a sulfotyrosine (tyrosine 154). Catalysis depends on serine 200, which acts as the Charge relay system.

This sequence belongs to the peptidase S1 family. As to quaternary structure, interacts with SERPINA1. It depends on Ca(2+) as a cofactor. Occurs in a single-chain form and a two-chain form, produced by proteolytic cleavage after Arg-122. Post-translationally, sulfation at Tyr-154 increases selectivity towards basic versus apolar residues at the P2' position of inhibitors that bind in a substrate-like fashion. Although the increase in selectivity is relatively small, it may facilitate digestion of a broader range of dietary proteins.

Its subcellular location is the secreted. The protein resides in the extracellular space. The enzyme catalyses Preferential cleavage: Arg-|-Xaa, Lys-|-Xaa.. Functionally, has activity against the synthetic substrates Boc-Phe-Ser-Arg-Mec, Boc-Leu-Thr-Arg-Mec, Boc-Gln-Ala-Arg-Mec and Boc-Val-Pro-Arg-Mec. The single-chain form is more active than the two-chain form against all of these substrates. The chain is Serine protease 1 from Homo sapiens (Human).